Here is a 437-residue protein sequence, read N- to C-terminus: Aspartate--tRNA(Asp/Asn) ligase (437 aa).

Residue Glu175 coordinates L-aspartate. Residues Gln197–Lys200 form an aspartate region. An L-aspartate-binding site is contributed by Arg219. ATP is bound by residues Arg219 to Glu221, Arg227 to Leu229, and Glu360. 2 residues coordinate Mg(2+): Glu360 and Ser363. Residues Ser363 and Arg367 each coordinate L-aspartate. Residue Gly408 to Arg411 coordinates ATP.

The protein belongs to the class-II aminoacyl-tRNA synthetase family. Type 2 subfamily. As to quaternary structure, homodimer. Mg(2+) serves as cofactor.

It localises to the cytoplasm. It catalyses the reaction tRNA(Asx) + L-aspartate + ATP = L-aspartyl-tRNA(Asx) + AMP + diphosphate. In terms of biological role, aspartyl-tRNA synthetase with relaxed tRNA specificity since it is able to aspartylate not only its cognate tRNA(Asp) but also tRNA(Asn). Reaction proceeds in two steps: L-aspartate is first activated by ATP to form Asp-AMP and then transferred to the acceptor end of tRNA(Asp/Asn). In Methanothermobacter thermautotrophicus (strain ATCC 29096 / DSM 1053 / JCM 10044 / NBRC 100330 / Delta H) (Methanobacterium thermoautotrophicum), this protein is Aspartate--tRNA(Asp/Asn) ligase.